The following is a 174-amino-acid chain: FMN reductase (NADH) SmoA (174 aa).

Belongs to the non-flavoprotein flavin reductase family.

The catalysed reaction is FMNH2 + NAD(+) = FMN + NADH + 2 H(+). Part of the sulfoquinovose monooxygenase (sulfo-SMO) pathway, a D-sulfoquinovose degradation pathway that enables the complete utilization of all carbons within sulfoquinovose (SQ) with concomitant production of inorganic sulfite. Catalyzes the NADH-dependent reduction of FMN. FMNH(2) is then transferred to the sulfoquinovose monooxygenase SmoC. The chain is FMN reductase (NADH) SmoA from Agrobacterium fabrum (strain C58 / ATCC 33970) (Agrobacterium tumefaciens (strain C58)).